The primary structure comprises 177 residues: Large ribosomal subunit protein uL6 (177 aa).

Belongs to the universal ribosomal protein uL6 family. In terms of assembly, part of the 50S ribosomal subunit.

Its function is as follows. This protein binds to the 23S rRNA, and is important in its secondary structure. It is located near the subunit interface in the base of the L7/L12 stalk, and near the tRNA binding site of the peptidyltransferase center. This is Large ribosomal subunit protein uL6 from Rhizobium rhizogenes (strain K84 / ATCC BAA-868) (Agrobacterium radiobacter).